Reading from the N-terminus, the 202-residue chain is Large ribosomal subunit protein bL25 (202 aa).

The tract at residues 180–202 (PKQEAFEEDAEPSPGEEPEGENQ) is disordered. Over residues 185–202 (FEEDAEPSPGEEPEGENQ) the composition is skewed to acidic residues.

Belongs to the bacterial ribosomal protein bL25 family. CTC subfamily. As to quaternary structure, part of the 50S ribosomal subunit; part of the 5S rRNA/L5/L18/L25 subcomplex. Contacts the 5S rRNA. Binds to the 5S rRNA independently of L5 and L18.

Its function is as follows. This is one of the proteins that binds to the 5S RNA in the ribosome where it forms part of the central protuberance. This chain is Large ribosomal subunit protein bL25, found in Bacillus velezensis (strain DSM 23117 / BGSC 10A6 / LMG 26770 / FZB42) (Bacillus amyloliquefaciens subsp. plantarum).